The chain runs to 376 residues: DNA methyltransferase CcrM (376 aa).

The RAMA domain occupies 273-370 (KATLSVMTGK…IDELRSVIRN (98 aa)).

It belongs to the N(4)/N(6)-methyltransferase family.

The enzyme catalyses a 2'-deoxyadenosine in DNA + S-adenosyl-L-methionine = an N(6)-methyl-2'-deoxyadenosine in DNA + S-adenosyl-L-homocysteine + H(+). In terms of biological role, a beta subtype methylase that recognizes the double-stranded sequence 5'-GANTC-3' and methylates A-2 on both strands. Overexpression leads to many branched and bloated cells, two to three times the size of wild-type cells, and cells that have 1-3 times the normal amount of DNA. Contributes to the accurate cell-cycle control of DNA replication and cellular morphology. Can fully replace its ortholog in C.crescentus. The polypeptide is DNA methyltransferase CcrM (smeIM) (Rhizobium meliloti (strain 1021) (Ensifer meliloti)).